The chain runs to 296 residues: Probable porphobilinogen deaminase (296 aa).

Residue Cys241 is modified to S-(dipyrrolylmethanemethyl)cysteine.

The protein belongs to the HMBS family. Requires dipyrromethane as cofactor.

It carries out the reaction 4 porphobilinogen + H2O = hydroxymethylbilane + 4 NH4(+). It participates in porphyrin-containing compound metabolism; protoporphyrin-IX biosynthesis; coproporphyrinogen-III from 5-aminolevulinate: step 2/4. Functionally, tetrapolymerization of the monopyrrole PBG into the hydroxymethylbilane pre-uroporphyrinogen in several discrete steps. The chain is Probable porphobilinogen deaminase from Pyrobaculum neutrophilum (strain DSM 2338 / JCM 9278 / NBRC 100436 / V24Sta) (Thermoproteus neutrophilus).